The primary structure comprises 401 residues: Elongation factor Tu 1 (401 aa).

Residues 10 to 209 enclose the tr-type G domain; sequence KPHVNVGTIG…AVDEYIPTPV (200 aa). A G1 region spans residues 19 to 26; it reads GHVDHGKT. Residue 19–26 coordinates GTP; it reads GHVDHGKT. Residue Thr26 participates in Mg(2+) binding. The segment at 60–64 is G2; sequence GITIA. The tract at residues 81–84 is G3; the sequence is DCPG. GTP is bound by residues 81–85 and 136–139; these read DCPGH and NKVD. The segment at 136–139 is G4; sequence NKVD. A G5 region spans residues 174 to 176; sequence SAL.

The protein belongs to the TRAFAC class translation factor GTPase superfamily. Classic translation factor GTPase family. EF-Tu/EF-1A subfamily. In terms of assembly, monomer.

The protein resides in the cytoplasm. The catalysed reaction is GTP + H2O = GDP + phosphate + H(+). GTP hydrolase that promotes the GTP-dependent binding of aminoacyl-tRNA to the A-site of ribosomes during protein biosynthesis. In Roseiflexus castenholzii (strain DSM 13941 / HLO8), this protein is Elongation factor Tu 1.